Consider the following 91-residue polypeptide: Essential MCU regulator, mitochondrial (91 aa).

Residues 45–65 traverse the membrane as a helical segment; that stretch reads VIPFGLLGVVLTVIPGLLIGA.

This sequence belongs to the SMDT1/EMRE family.

The protein localises to the mitochondrion inner membrane. Functionally, essential regulatory subunit of the mitochondrial calcium uniporter (mcu) channel, a protein that mediates calcium uptake into mitochondria. In Aedes aegypti (Yellowfever mosquito), this protein is Essential MCU regulator, mitochondrial.